A 602-amino-acid polypeptide reads, in one-letter code: Adenylosuccinate synthetase (602 aa).

Residues 74 to 80 and 104 to 106 each bind GTP; these read GDEGKGK and GHT. The active-site Proton acceptor is the D75. Mg(2+) is bound by residues D75 and G104. IMP contacts are provided by residues 75 to 78, 102 to 105, T189, K203, Q315, T331, and K459; these read DEGK and NAGH. H105 serves as the catalytic Proton donor. 455 to 461 lines the substrate pocket; it reads AVTKKPR. GTP contacts are provided by residues R461 and 589-591; that span reads GNG.

It belongs to the adenylosuccinate synthetase family. In terms of assembly, homodimer. The cofactor is Mg(2+).

It localises to the cytoplasm. The catalysed reaction is IMP + L-aspartate + GTP = N(6)-(1,2-dicarboxyethyl)-AMP + GDP + phosphate + 2 H(+). It participates in purine metabolism; AMP biosynthesis via de novo pathway; AMP from IMP: step 1/2. Its function is as follows. Plays an important role in the salvage pathway for purine nucleotide biosynthesis. Catalyzes the first committed step in the biosynthesis of AMP from IMP. The chain is Adenylosuccinate synthetase from Trypanosoma brucei brucei (strain 927/4 GUTat10.1).